Consider the following 363-residue polypeptide: Mitochondrial RNA-splicing protein MRS1 (363 aa).

The protein resides in the mitochondrion. Function in mitochondrial RNA splicing in the excision of mitochondrial group I introns aI1 and aI5 beta from COX1 and bI3 from COB transcripts and thus would be involved in obtaining the correct structure of the intron, to allow the RNA catalyzed reactions to occur. The sequence is that of Mitochondrial RNA-splicing protein MRS1 (MRS1) from Saccharomyces paradoxus (Yeast).